The primary structure comprises 1328 residues: Protein turtle homolog B (1328 aa).

Positions 1 to 20 (MIWYVATLIASVISTRGLVA) are cleaved as a signal peptide. At 21–722 (QVAHGLREEP…DLTDDGLARP (702 aa)) the chain is on the extracellular side. Ig-like domains are found at residues 30 to 115 (PEFV…ECKV), 139 to 226 (PTFT…LLVQ), 228 to 320 (PPFI…AYLT), 324 to 415 (PARV…ARLV), and 420 to 504 (PYFT…THLT). 2 disulfides stabilise this stretch: Cys45-Cys113 and Cys161-Cys208. N-linked (GlcNAc...) asparagine glycans are attached at residues Asn241 and Asn258. Disulfide bonds link Cys250-Cys303, Cys346-Cys397, and Cys442-Cys488. Fibronectin type-III domains lie at 512-604 (APGS…TLAF) and 614-708 (LVTP…STDI). N-linked (GlcNAc...) asparagine glycosylation is present at Asn624. The helical transmembrane segment at 723–743 (VLAGIVATICFLAAAILFSTL) threads the bilayer. Topologically, residues 744 to 1328 (AACFVNKQRK…EPPTTLPTSG (585 aa)) are cytoplasmic. Disordered stretches follow at residues 758–817 (RKKD…EKEL), 914–1040 (PMSS…PEPW), and 1107–1328 (SPGR…PTSG). 3 positions are modified to phosphoserine: Ser775, Ser783, and Ser794. The span at 990-1001 (SPLSSVMSSPPL) shows a compositional bias: low complexity. Polar residues-rich tracts occupy residues 1018–1033 (ENASNSTLPLTQTPTG), 1129–1141 (LVSQGQLRHTSQG), and 1199–1214 (SRLSPLTQSPLSSRTG). An Omega-N-methylarginine modification is found at Arg1136. Phosphoserine is present on residues Ser1207 and Ser1215. The segment covering 1246–1273 (SFSRKSTPSSTGSPSQSSRSGSPSYRPT) has biased composition (low complexity). Pro residues-rich tracts occupy residues 1284 to 1295 (PSPPPGPAPPAP) and 1318 to 1328 (PEPPTTLPTSG).

It belongs to the immunoglobulin superfamily. Turtle family. As to quaternary structure, found in a complex with MAGI2 and NLGN2, where it interacts with MAGI2 (via PDZ 5 and PDZ 6 domains). Post-translationally, N-glycosylated and sialylated. Not significantly O-glycosylated. As to expression, detected primarily in brain, including cortex, hippocampus, cerebellum and striatum. Largely restricted to inhibitory GABAergic interneurons (at protein level).

It localises to the postsynaptic cell membrane. It is found in the postsynaptic density. Transmembrane protein which is abundantly expressed in interneurons, where it may regulate inhibitory synapse development. May mediate homophilic cell adhesion. The chain is Protein turtle homolog B from Rattus norvegicus (Rat).